Here is a 342-residue protein sequence, read N- to C-terminus: DDB1- and CUL4-associated factor 7 (342 aa).

WD repeat units lie at residues 6–52 (KRKE…LVGL), 60–100 (ICRN…VWRV), 108–150 (ECLL…IWGL), 165–206 (HVKT…MFDL), 213–252 (TIIY…ILDV), 257–296 (TPVA…IWDI), and 303–342 (IEDP…ILRV).

Belongs to the WD repeat DCAF7 family. Interacts with DYRK1A, DYRK1B and DIAPH1. Interacts with DDB1. Interacts with ZNF703. Interacts with human adenovirus 5 E1A protein.

The protein localises to the cytoplasm. It localises to the nucleus. It functions in the pathway protein modification; protein ubiquitination. In terms of biological role, involved in craniofacial development. Acts upstream of the EDN1 pathway and is required for formation of the upper jaw equivalent, the palatoquadrate. The activity required for EDN1 pathway function differs between the first and second arches. Associates with DIAPH1 and controls GLI1 transcriptional activity. Could be involved in normal and disease skin development. May function as a substrate receptor for CUL4-DDB1 E3 ubiquitin-protein ligase complex. The chain is DDB1- and CUL4-associated factor 7 (DCAF7) from Homo sapiens (Human).